A 276-amino-acid chain; its full sequence is Sulfur carrier protein FdhD (276 aa).

The active-site Cysteine persulfide intermediate is Cys-122. A Mo-bis(molybdopterin guanine dinucleotide)-binding site is contributed by 259–264 (FCRRGR).

It belongs to the FdhD family.

The protein resides in the cytoplasm. Functionally, required for formate dehydrogenase (FDH) activity. Acts as a sulfur carrier protein that transfers sulfur from IscS to the molybdenum cofactor prior to its insertion into FDH. This Proteus mirabilis (strain HI4320) protein is Sulfur carrier protein FdhD.